The sequence spans 661 residues: Fusaric acid cluster transcription factor FUB12 (661 aa).

The zn(2)-C6 fungal-type DNA-binding region spans 17–48 (CVPCRTRKIKCNAAVVGLPCGSCVSRECPDEC). Disordered stretches follow at residues 56–132 (RTVK…PPGQ) and 151–184 (SAAQTDASDHQSNDEPDDSFNSQIHHWNPPPQLD). Over residues 73–98 (PDTNGSVLSPRQQQLPTNVSRQATDS) the composition is skewed to polar residues. The span at 99–109 (SHSDPVEESIH) shows a compositional bias: basic and acidic residues. The span at 110-119 (ASHTGSSLRN) shows a compositional bias: polar residues. Basic and acidic residues predominate over residues 120-129 (DTPHSRDRRP).

It is found in the nucleus. Its function is as follows. Transcription factor that is involved in the formation of the two Fusaric acid derivatives, dehydrofusaric acid and fusarinolic acid, serving as a detoxification mechanism. In Gibberella moniliformis (strain M3125 / FGSC 7600) (Maize ear and stalk rot fungus), this protein is Fusaric acid cluster transcription factor FUB12.